Consider the following 222-residue polypeptide: Probable nicotinate-nucleotide adenylyltransferase (222 aa).

The protein belongs to the NadD family.

The catalysed reaction is nicotinate beta-D-ribonucleotide + ATP + H(+) = deamido-NAD(+) + diphosphate. It participates in cofactor biosynthesis; NAD(+) biosynthesis; deamido-NAD(+) from nicotinate D-ribonucleotide: step 1/1. Functionally, catalyzes the reversible adenylation of nicotinate mononucleotide (NaMN) to nicotinic acid adenine dinucleotide (NaAD). This is Probable nicotinate-nucleotide adenylyltransferase from Xylella fastidiosa (strain M12).